The primary structure comprises 137 residues: Type 3 secretion system pilotin (137 aa).

The first 14 residues, 1–14 (MLLPLALLLGGCVS), serve as a signal peptide directing secretion.

Belongs to the ExsB/YscW family.

The protein resides in the cell outer membrane. In terms of biological role, involved in the synthesis of the type III secretion system (T3SS), also called injectisome, which is used to inject bacterial effector proteins into eukaryotic host cells. Pilot protein that is required for the proper localization of the secretin PscC in the outer membrane. Necessary for full in vivo virulence. This chain is Type 3 secretion system pilotin, found in Pseudomonas aeruginosa (strain ATCC 15692 / DSM 22644 / CIP 104116 / JCM 14847 / LMG 12228 / 1C / PRS 101 / PAO1).